The sequence spans 795 residues: ATP-dependent RNA helicase DHX15 (795 aa).

The disordered stretch occupies residues 1–111 (MSKRHRLDLG…HTGHTGHTSL (111 aa)). Serine 15 is modified (phosphoserine). Positions 20 to 62 (AGTDGKDRERDRDREDRSKDRDRERDRGDREREREKEKEKELR) are enriched in basic and acidic residues. A compositionally biased stretch (low complexity) spans 79–110 (ASHSAHSTHSAHSTHSTHSAHSTHTGHTGHTS). A Helicase ATP-binding domain is found at 147 to 313 (TDILVRHQSF…FDNCPLLTIP (167 aa)). 160-167 (GETGSGKT) contacts ATP. The DEAH box motif lies at 260–263 (DEAH). The Helicase C-terminal domain maps to 338–518 (TVIQIHMCEE…SVVLQLKKLG (181 aa)). At lysine 488 the chain carries N6-acetyllysine. A Glycyl lysine isopeptide (Lys-Gly) (interchain with G-Cter in SUMO2) cross-link involves residue lysine 786.

The protein belongs to the DEAD box helicase family. DEAH subfamily. DDX15/PRP43 sub-subfamily. In terms of assembly, component of the U11/U12 snRNPs that are part of the U12-type spliceosome. Identified in the Intron Large spliceosome complex (IL, also named intron lariat spliceosome), a post-mRNA release spliceosomal complex containing the excised intron, U2, U5 and U6 snRNPs, and splicing factors; the association may be transient. The IL complex exists in two distinct conformations, one with the DHX15 (ILS2) and one without (ILS1). Interacts with TFIP11 (via G-patch domain); indicative for a recruitment to the IL complex. Interacts with SSB/La. Interacts with GPATCH2 (via G-patch domain); promoting the RNA helicase activity. Interacts with NKRF (via G-patch domain); promoting the RNA helicase activity. Interacts with NLRP6. As to expression, ubiquitous.

It localises to the nucleus. It is found in the nucleolus. It carries out the reaction ATP + H2O = ADP + phosphate + H(+). With respect to regulation, ATPase activity is enhanced upon binding to G-patch domain-containing proteins. G-patch domain-containing proteins act like a brace that tethers mobile sections of DHX15 together, stabilizing a functional conformation with high RNA affinity, thereby promoting the ATPase activity. Its function is as follows. RNA helicase involved in mRNA processing and antiviral innate immunity. Pre-mRNA processing factor involved in disassembly of spliceosomes after the release of mature mRNA. In cooperation with TFIP11 seem to be involved in the transition of the U2, U5 and U6 snRNP-containing IL complex to the snRNP-free IS complex leading to efficient debranching and turnover of excised introns. Plays a key role in antiviral innate immunity by promoting both MAVS-dependent signaling and NLRP6 inflammasome. Acts as an RNA virus sensor: recognizes and binds viral double stranded RNA (dsRNA) and activates the MAVS-dependent signaling to produce interferon-beta and interferon lambda-3 (IFNL3). Involved in intestinal antiviral innate immunity together with NLRP6: recognizes and binds viral dsRNA and promotes activation of the NLRP6 inflammasome in intestinal epithelial cells to restrict infection by enteric viruses. The NLRP6 inflammasome acts by promoting maturation and secretion of IL18 in the extracellular milieu. Also involved in antibacterial innate immunity by promoting Wnt-induced antimicrobial protein expression in Paneth cells. The chain is ATP-dependent RNA helicase DHX15 from Mus musculus (Mouse).